The following is a 127-amino-acid chain: Large ribosomal subunit protein bL21c (127 aa).

It belongs to the bacterial ribosomal protein bL21 family. In terms of assembly, part of the 50S ribosomal subunit.

It localises to the plastid. It is found in the chloroplast. Its function is as follows. This protein binds to 23S rRNA. This Adiantum capillus-veneris (Maidenhair fern) protein is Large ribosomal subunit protein bL21c.